The sequence spans 173 residues: MSIILGIDPGSRITGYGVIRQQGRQLEYIGSGCIRTAVDDLPTRLKLVYAGVSEIITQFNPDCFAIEQVFMAKNADSALKLGQARGAAIVAAVNRDLPVFEYAARQIKQTVVGNGGAEKAQVQHMVRSLLKLPANPQADAADALAVAITHCHVSQNALRISSGRLNLARGRLR.

Active-site residues include aspartate 8, glutamate 67, and aspartate 139. Residues aspartate 8, glutamate 67, and aspartate 139 each contribute to the Mg(2+) site.

It belongs to the RuvC family. In terms of assembly, homodimer which binds Holliday junction (HJ) DNA. The HJ becomes 2-fold symmetrical on binding to RuvC with unstacked arms; it has a different conformation from HJ DNA in complex with RuvA. In the full resolvosome a probable DNA-RuvA(4)-RuvB(12)-RuvC(2) complex forms which resolves the HJ. The cofactor is Mg(2+).

Its subcellular location is the cytoplasm. The catalysed reaction is Endonucleolytic cleavage at a junction such as a reciprocal single-stranded crossover between two homologous DNA duplexes (Holliday junction).. In terms of biological role, the RuvA-RuvB-RuvC complex processes Holliday junction (HJ) DNA during genetic recombination and DNA repair. Endonuclease that resolves HJ intermediates. Cleaves cruciform DNA by making single-stranded nicks across the HJ at symmetrical positions within the homologous arms, yielding a 5'-phosphate and a 3'-hydroxyl group; requires a central core of homology in the junction. The consensus cleavage sequence is 5'-(A/T)TT(C/G)-3'. Cleavage occurs on the 3'-side of the TT dinucleotide at the point of strand exchange. HJ branch migration catalyzed by RuvA-RuvB allows RuvC to scan DNA until it finds its consensus sequence, where it cleaves and resolves the cruciform DNA. This is Crossover junction endodeoxyribonuclease RuvC from Edwardsiella ictaluri (strain 93-146).